A 458-amino-acid chain; its full sequence is Carboxypeptidase N catalytic chain (458 aa).

Positions 1-20 (MSDLLSVFLHLLLLFKLVAP) are cleaved as a signal peptide. In terms of domain architecture, Peptidase M14 spans 24-338 (RHHRYDDLVR…EALIQFLEQV (315 aa)). C42 and C104 form a disulfide bridge. Residues H86, E89, and H216 each coordinate Zn(2+). Cysteines 271 and 311 form a disulfide. The active-site Proton donor/acceptor is E308. Residues T400, T402, and T409 are each glycosylated (O-linked (GalNAc...) threonine). The segment at 423-458 (SPVRRAPSRRHGVRAKVQPQARKKEMEMRQLQRGPA) is disordered.

The protein belongs to the peptidase M14 family. Tetramer of two catalytic chains and two glycosylated inactive chains. Zn(2+) serves as cofactor. In terms of tissue distribution, synthesized in the liver and secreted in plasma.

The protein resides in the secreted. Its subcellular location is the extracellular space. The catalysed reaction is Release of a C-terminal basic amino acid, preferentially lysine.. Its function is as follows. Protects the body from potent vasoactive and inflammatory peptides containing C-terminal Arg or Lys (such as kinins or anaphylatoxins) which are released into the circulation. The protein is Carboxypeptidase N catalytic chain (CPN1) of Homo sapiens (Human).